The chain runs to 568 residues: SLAIN motif-containing protein 1 (568 aa).

Disordered regions lie at residues 1-22, 59-92, 139-162, 235-256, and 291-403; these read MMAEQVKCASAGVSSGAGSGPV, LLLLPPPPPAAPPPAGLQPLGPRSPPAATATAAA, GGGPEPGGAGTPPGAAAAPPSPPP, YTSRGSPLSPQSSIDSELSTSE, and STSA…LRRS. The stretch at 21–56 forms a coiled coil; it reads PVVNAELEVKKLQELVRKLEKQNEQLRSRAASAAAA. Pro residues predominate over residues 62–74; sequence LPPPPPAAPPPAG. Over residues 75-92 the composition is skewed to low complexity; sequence LQPLGPRSPPAATATAAA. Residues 139–149 are compositionally biased toward gly residues; that stretch reads GGGPEPGGAGT. Over residues 235–245 the composition is skewed to polar residues; it reads YTSRGSPLSPQ. Ser-243 is modified (phosphoserine). 2 stretches are compositionally biased toward low complexity: residues 246–255 and 291–307; these read SSIDSELSTS and STSASVSRHSSSVSLSS. Residues 316-329 show a composition bias toward acidic residues; the sequence is QEYDQYSLEDEEEF. The segment covering 366 to 384 has biased composition (low complexity); that stretch reads SSQYFPSNNYQQQQYYSPQ. Positions 385–395 are enriched in polar residues; the sequence is AQTPDQQPNRT. Asymmetric dimethylarginine occurs at positions 471 and 543.

Belongs to the SLAIN motif-containing family. In terms of assembly, interacts with MAPRE1, MAPRE2, MAPRE3 and CKAP5. Interacts with ZDHHC17 (via ANK repeats). In terms of tissue distribution, expressed in embryonic stem cells. Expressed in brain.

It localises to the cytoplasm. Its subcellular location is the cytoskeleton. Microtubule plus-end tracking protein that might be involved in the regulation of cytoplasmic microtubule dynamics, microtubule organization and microtubule elongation. This chain is SLAIN motif-containing protein 1 (SLAIN1), found in Homo sapiens (Human).